Here is a 283-residue protein sequence, read N- to C-terminus: Tetrahydroxynaphthalene reductase (283 aa).

The disordered stretch occupies residues 1–21; sequence MPAVTQPRGESKYDAIPGPLG. 39–63 is an NADP(+) binding site; the sequence is RGIGREMAMELGRRGCKVIVNYANS. Substrate is bound at residue serine 164. Residue tyrosine 178 is the Proton acceptor of the active site.

Belongs to the short-chain dehydrogenases/reductases (SDR) family. Homotetramer.

The enzyme catalyses scytalone + NADP(+) = naphthalene-1,3,6,8-tetrol + NADPH + H(+). It functions in the pathway pigment biosynthesis; melanin biosynthesis. Its function is as follows. Catalyzes the NADPH-dependent reduction of 1,3,6,8-tetrahydroxynaphthalene (T4HN) into (+)-scytalone and 1,3,8-trihydroxynaphthalene into (-)-vermelone. This enzyme is the biochemical target of several commercially important fungicides which are used to prevent blast disease in rice plants. This is Tetrahydroxynaphthalene reductase from Pyricularia oryzae (strain 70-15 / ATCC MYA-4617 / FGSC 8958) (Rice blast fungus).